The following is a 396-amino-acid chain: Pyruvate synthase subunit PorA (396 aa).

In terms of assembly, heterotetramer of one alpha, one beta, one delta and one gamma chain.

The catalysed reaction is 2 oxidized [2Fe-2S]-[ferredoxin] + pyruvate + CoA = 2 reduced [2Fe-2S]-[ferredoxin] + acetyl-CoA + CO2 + H(+). This Pyrococcus furiosus (strain ATCC 43587 / DSM 3638 / JCM 8422 / Vc1) protein is Pyruvate synthase subunit PorA (porA).